Here is a 504-residue protein sequence, read N- to C-terminus: Acetylcholine receptor subunit epsilon (504 aa).

The signal sequence occupies residues 1–19 (MESGVRILSLLILLHNSLA). Residues 20–240 (SESEESRLIK…IVFNLIIQRK (221 aa)) lie on the Extracellular side of the membrane. N-linked (GlcNAc...) asparagine glycans are attached at residues Asn88 and Asn161. Cys148 and Cys162 are oxidised to a cystine. A helical membrane pass occupies residues 241-265 (PLFYIINIIVPCVLISFLVVLVYFL). The Cytoplasmic portion of the chain corresponds to 266–273 (PAKAGGQK). The chain crosses the membrane as a helical span at residues 274–292 (CTVSISVLLAQTVFLFLIA). At 293–307 (QMVPETSLSVPLIGK) the chain is on the extracellular side. A helical transmembrane segment spans residues 308-329 (YLMFVMFVSTLIVLSCVIVLNV). Residues 330–473 (SLRSPSTHNL…WILIGKVLDV (144 aa)) lie on the Cytoplasmic side of the membrane. A helical membrane pass occupies residues 474–497 (LCFWVALPLFVLGTLAIFLMGHFN). Topologically, residues 498-504 (TAPEHPF) are extracellular.

It belongs to the ligand-gated ion channel (TC 1.A.9) family. Acetylcholine receptor (TC 1.A.9.1) subfamily. Epsilon/CHRNE sub-subfamily. As to quaternary structure, pentamer of two alpha chains, and one each of the beta, delta, and gamma (in immature muscle) or epsilon (in mature muscle) chains.

It localises to the postsynaptic cell membrane. The protein localises to the cell membrane. The enzyme catalyses K(+)(in) = K(+)(out). It carries out the reaction Na(+)(in) = Na(+)(out). Its function is as follows. After binding acetylcholine, the AChR responds by an extensive change in conformation that affects all subunits and leads to opening of an ion-conducting channel across the plasma membrane. This Xenopus laevis (African clawed frog) protein is Acetylcholine receptor subunit epsilon (chrne).